Consider the following 453-residue polypeptide: Ribosomal protein uS12 methylthiotransferase RimO (453 aa).

Residues 3 to 118 (KKVGIISLGC…IAKVIEEFYS (116 aa)) enclose the MTTase N-terminal domain. [4Fe-4S] cluster is bound by residues cysteine 12, cysteine 48, cysteine 81, cysteine 162, cysteine 166, and cysteine 169. The region spanning 148–378 (STNSGYAYLK…MQLQKEIVQR (231 aa)) is the Radical SAM core domain. Residues 381-449 (ESRLEKVYKT…DYDLIGEVIN (69 aa)) form the TRAM domain.

Belongs to the methylthiotransferase family. RimO subfamily. [4Fe-4S] cluster serves as cofactor.

Its subcellular location is the cytoplasm. The catalysed reaction is L-aspartate(89)-[ribosomal protein uS12]-hydrogen + (sulfur carrier)-SH + AH2 + 2 S-adenosyl-L-methionine = 3-methylsulfanyl-L-aspartate(89)-[ribosomal protein uS12]-hydrogen + (sulfur carrier)-H + 5'-deoxyadenosine + L-methionine + A + S-adenosyl-L-homocysteine + 2 H(+). Functionally, catalyzes the methylthiolation of an aspartic acid residue of ribosomal protein uS12. The polypeptide is Ribosomal protein uS12 methylthiotransferase RimO (Acetivibrio thermocellus (strain ATCC 27405 / DSM 1237 / JCM 9322 / NBRC 103400 / NCIMB 10682 / NRRL B-4536 / VPI 7372) (Clostridium thermocellum)).